We begin with the raw amino-acid sequence, 74 residues long: Bacteriocin hiracin-JM79 (74 aa).

The N-terminal stretch at 1-30 (MKKKVLKHCVILGILGTCLAGIGTGIKVDA) is a signal peptide.

It localises to the secreted. Its function is as follows. Bacteriocin with antibacterial activity against the Gram-positive Listeria, Enterococcus, Propionibacterium, Staphylococcus and some strains of Clostridium, Lactobacillus and Pediococcus. Lacks antibacterial activity against Gram-negative bacteria. This is Bacteriocin hiracin-JM79 from Enterococcus hirae.